A 261-amino-acid polypeptide reads, in one-letter code: uncharacterized protein (261 aa).

The N-terminal stretch at 1 to 22 is a signal peptide; it reads MKSIKRIGLCISLLILIIFVTS. A lipid anchor (N-palmitoyl cysteine) is attached at Cys-23. The S-diacylglycerol cysteine moiety is linked to residue Cys-23.

It belongs to the staphylococcal tandem lipoprotein family.

The protein resides in the cell membrane. This is an uncharacterized protein from Staphylococcus aureus (strain USA300).